The primary structure comprises 486 residues: Cardiolipin synthase A (486 aa).

Transmembrane regions (helical) follow at residues 3–23 (TFYT…IAGV) and 38–58 (MAWL…YLSL). 2 consecutive PLD phosphodiesterase domains span residues 219-246 (MDLR…VDPR) and 399-426 (EGGL…DMRS). Residues His-224, Lys-226, Asp-231, His-404, Lys-406, and Asp-411 contribute to the active site.

The protein belongs to the phospholipase D family. Cardiolipin synthase subfamily. ClsA sub-subfamily.

It is found in the cell inner membrane. It carries out the reaction 2 a 1,2-diacyl-sn-glycero-3-phospho-(1'-sn-glycerol) = a cardiolipin + glycerol. In terms of biological role, catalyzes the reversible phosphatidyl group transfer from one phosphatidylglycerol molecule to another to form cardiolipin (CL) (diphosphatidylglycerol) and glycerol. This chain is Cardiolipin synthase A, found in Erwinia tasmaniensis (strain DSM 17950 / CFBP 7177 / CIP 109463 / NCPPB 4357 / Et1/99).